The chain runs to 167 residues: Outer envelope pore protein 21A, chloroplastic (167 aa).

At 1–21 (METSLRYATNSRSLKIHAKEK) the chain is on the cytoplasmic side. The chain crosses the membrane as a beta stranded span at residues 22–31 (FPVNSKTRLQ). Residues 32–55 (LHGELDTGAGVPSYFCAMIRYFFH) are Chloroplast intermembrane-facing. Residues 56–65 (EASTNLGVGL) form a beta stranded membrane-spanning segment. Residues 66-71 (HYDKRE) lie on the Cytoplasmic side of the membrane. Residues 72-81 (KLRCLVRGKK) form a beta stranded membrane-spanning segment. Topologically, residues 82 to 87 (KFPVIT) are chloroplast intermembrane. The chain crosses the membrane as a beta stranded span at residues 88–97 (DEVVTFNIKG). The Cytoplasmic segment spans residues 98–110 (RCDFDQDLVQRNA). The beta stranded transmembrane segment at 111–120 (KGAAEFDWNI) threads the bilayer. At 121-127 (WKFQKDQ) the chain is on the chloroplast intermembrane side. A beta stranded transmembrane segment spans residues 128–137 (DLRLRIGYEM). The Cytoplasmic segment spans residues 138-142 (FEKVP). Residues 143-152 (YMQIRENNWT) form a beta stranded membrane-spanning segment. The Chloroplast intermembrane segment spans residues 153-158 (FNTNLK). Residues 159-167 (GKWNVRYDL) form a beta stranded membrane-spanning segment.

Belongs to the plastid outer envelope porin OEP21 (TC 1.B.29) family.

Its subcellular location is the plastid. It is found in the etioplast membrane. It localises to the chloroplast outer membrane. Voltage-dependent rectifying anion channel that facilitates the translocation between chloroplast and cytoplasm of phosphorylated carbohydrates such as triosephosphate, 3-phosphoglycerate and inorganic phosphate (Pi) depending of ATP to triosephosphate ratio in the plastidial intermembrane space; in high triosephosphate/ATP conditions (e.g. photosynthesis), export of triosphosphate from chloroplast (outward rectifying channels), but in high ATP/triosephosphate conditions (e.g. dark phase), import of phosphosolutes (inward rectifying channels). This Arabidopsis thaliana (Mouse-ear cress) protein is Outer envelope pore protein 21A, chloroplastic (OEP21A).